The chain runs to 339 residues: Replication factor C subunit 4 (339 aa).

G49–T56 contacts ATP.

It belongs to the activator 1 small subunits family. Heterotetramer of subunits RFC2, RFC3, RFC4 and RFC5 that can form a complex with RFC1.

Its subcellular location is the nucleus. May be involved in DNA replication and thus regulate cell proliferation. This is Replication factor C subunit 4 (RFC4) from Arabidopsis thaliana (Mouse-ear cress).